The chain runs to 222 residues: Kinetochore protein Spc25 (222 aa).

Residues 51-86 are a coiled coil; it reads RHQRKVGKLQKVLMERREELDKRVSFIEELDRELEA.

The protein belongs to the SPC25 family. In terms of assembly, component of the Ndc80 complex, which is composed of Ndc80, Nuf2 and Spc25.

The protein localises to the nucleus. It localises to the chromosome. The protein resides in the centromere. Its subcellular location is the kinetochore. In terms of biological role, acts as a component of the essential kinetochore-associated Ndc80 complex, which is required for chromosome segregation and spindle checkpoint activity during meiosis and mitosis. Required for kinetochore integrity and the organization of stable microtubule binding sites in the outer plate of the kinetochore. Participates in SAC signaling that responds specifically to disruptions in spindle microtubule dynamics. The NDC80 complex synergistically enhances the affinity of the SKA1 complex for microtubules and may allow the NDC80 complex to track depolymerizing microtubules. The sequence is that of Kinetochore protein Spc25 from Drosophila simulans (Fruit fly).